The sequence spans 959 residues: Translation initiation factor IF-2 (959 aa).

The span at 1-10 (MSDKTNDDKT) shows a compositional bias: basic and acidic residues. The segment at 1–374 (MSDKTNDDKT…SQMQETREKI (374 aa)) is disordered. Polar residues predominate over residues 27-37 (EQSTVRQNFSH). Composition is skewed to low complexity over residues 63–118 (AAAA…VTKP) and 128–138 (QRPGGQQAQRP). Composition is skewed to basic and acidic residues over residues 154-225 (SEMD…EAAK) and 232-241 (ARSERRDDAR). The segment covering 246 to 284 (GARPQQAGRPQGGRPQPAGRPQQGSPRPAPIIADAAPIA) has biased composition (low complexity). A compositionally biased stretch (basic and acidic residues) spans 318 to 333 (PEVRAPKVVKGEDDRR). Residues 457-626 (SRPPVVTIMG…LLQAEMLDLK (170 aa)) form the tr-type G domain. The tract at residues 466 to 473 (GHVDHGKT) is G1. 466 to 473 (GHVDHGKT) contacts GTP. Residues 491-495 (GITQH) are G2. The segment at 512 to 515 (DTPG) is G3. GTP contacts are provided by residues 512–516 (DTPGH) and 566–569 (NKID). Residues 566 to 569 (NKID) are G4. Positions 602-604 (SAK) are G5.

The protein belongs to the TRAFAC class translation factor GTPase superfamily. Classic translation factor GTPase family. IF-2 subfamily.

Its subcellular location is the cytoplasm. In terms of biological role, one of the essential components for the initiation of protein synthesis. Protects formylmethionyl-tRNA from spontaneous hydrolysis and promotes its binding to the 30S ribosomal subunits. Also involved in the hydrolysis of GTP during the formation of the 70S ribosomal complex. The chain is Translation initiation factor IF-2 from Brucella canis (strain ATCC 23365 / NCTC 10854 / RM-666).